The chain runs to 247 residues: DNA repair protein RecO (247 aa).

It belongs to the RecO family.

Its function is as follows. Involved in DNA repair and RecF pathway recombination. The polypeptide is DNA repair protein RecO (Brucella abortus (strain 2308)).